Reading from the N-terminus, the 98-residue chain is ATP synthase subunit alpha, chloroplastic (98 aa).

This sequence belongs to the ATPase alpha/beta chains family. In terms of assembly, F-type ATPases have 2 components, CF(1) - the catalytic core - and CF(0) - the membrane proton channel. CF(1) has five subunits: alpha(3), beta(3), gamma(1), delta(1), epsilon(1). CF(0) has four main subunits: a, b, b' and c.

It is found in the plastid. It localises to the chloroplast thylakoid membrane. It catalyses the reaction ATP + H2O + 4 H(+)(in) = ADP + phosphate + 5 H(+)(out). Functionally, produces ATP from ADP in the presence of a proton gradient across the membrane. The alpha chain is a regulatory subunit. In Populus euphratica (Euphrates poplar), this protein is ATP synthase subunit alpha, chloroplastic (atpA).